The chain runs to 248 residues: Zinc finger CCCH domain-containing protein 36 (248 aa).

2 disordered regions span residues methionine 1–serine 37 and methionine 87–phenylalanine 110. The C3H1-type 1 zinc-finger motif lies at glycine 36–proline 64. Positions serine 90–glycine 103 are enriched in gly residues. Residues serine 113–valine 177 enclose the KH domain. The interval alanine 188–histidine 209 is disordered. Residues proline 192–serine 204 are compositionally biased toward gly residues. A C3H1-type 2 zinc finger spans residues asparagine 213–alanine 240.

The chain is Zinc finger CCCH domain-containing protein 36 from Arabidopsis thaliana (Mouse-ear cress).